A 320-amino-acid polypeptide reads, in one-letter code: Methyltransferase gedG (320 aa).

The tract at residues 61 to 154 is methyltransferase domain; that stretch reads DAGAGNGVYS…QLRPGGTFAC (94 aa). The tract at residues 231-252 is disordered; sequence GLLPPERRGEVTEPDHEGPHDQ. Residues 235–252 are compositionally biased toward basic and acidic residues; the sequence is PERRGEVTEPDHEGPHDQ.

It belongs to the methyltransferase superfamily.

It functions in the pathway secondary metabolite biosynthesis. Methyltransferase; part of the gene cluster that mediates the biosynthesis of geodin, an intermediate in the biosynthesis of other natural products. The pathway begins with the synthesis of atrochrysone thioester by the polyketide synthase (PKS) gedC. The atrochrysone carboxyl ACP thioesterase gedB then breaks the thioester bond and releases the atrochrysone carboxylic acid from gedC. The atrochrysone carboxylic acid is then converted to atrochrysone which is further transformed into emodinanthrone. The next step is performed by the emodinanthrone oxygenase gedH that catalyzes the oxidation of emodinanthrone to emodin. Emodin O-methyltransferase encoded probably by gedA then catalyzes methylation of the 8-hydroxy group of emodin to form questin. Ring cleavage of questin by questin oxidase gedK leads to desmethylsulochrin via several intermediates including questin epoxide. Another methylation step probably catalyzed by methyltransferase gedG leads to the formation of sulochrin which is further converted to dihydrogeodin by the sulochrin halogenase gedL. Finally, the dihydrogeodin oxidase gedJ catalyzes the stereospecific phenol oxidative coupling reaction converting dihydrogeodin to geodin. The chain is Methyltransferase gedG from Aspergillus terreus (strain NIH 2624 / FGSC A1156).